The chain runs to 349 residues: [LysW]-L-2-aminoadipate/[LysW]-L-glutamate phosphate reductase (349 aa).

An NADP(+)-binding site is contributed by 10-13 (SGYT). Residue cysteine 150 is part of the active site. An NADP(+)-binding site is contributed by asparagine 316.

The protein belongs to the NAGSA dehydrogenase family. Type 1 subfamily. LysY sub-subfamily.

The protein resides in the cytoplasm. The enzyme catalyses [amino-group carrier protein]-C-terminal-N-(1-carboxy-5-oxopentan-1-yl)-L-glutamine + phosphate + NADP(+) = [amino-group carrier protein]-C-terminal-N-(1-carboxy-5-phosphooxy-5-oxopentan-1-yl)-L-glutamine + NADPH + H(+). The catalysed reaction is [amino-group carrier protein]-C-terminal-gamma-(L-glutamyl-5-semialdehyde)-L-glutamate + phosphate + NADP(+) = [amino-group carrier protein]-C-terminal-gamma-(5-phospho-L-glutamyl)-L-glutamate + NADPH + H(+). It participates in amino-acid biosynthesis; L-lysine biosynthesis via AAA pathway; L-lysine from L-alpha-aminoadipate (Thermus route): step 3/5. It functions in the pathway amino-acid biosynthesis; L-arginine biosynthesis. Functionally, involved in both the arginine and lysine biosynthetic pathways. This Sulfurisphaera tokodaii (strain DSM 16993 / JCM 10545 / NBRC 100140 / 7) (Sulfolobus tokodaii) protein is [LysW]-L-2-aminoadipate/[LysW]-L-glutamate phosphate reductase.